The sequence spans 311 residues: Oxygen-dependent coproporphyrinogen-III oxidase (311 aa).

Ser-93 serves as a coordination point for substrate. His-97 and His-107 together coordinate a divalent metal cation. The active-site Proton donor is the His-107. Residue 109–111 (NVR) coordinates substrate. A divalent metal cation-binding residues include His-153 and His-184. The tract at residues 252 to 287 (YVEFNLVFDRGTLFGLQSGGRTESILMSLPPVVKWR) is important for dimerization. 270-272 (GGR) contributes to the substrate binding site.

This sequence belongs to the aerobic coproporphyrinogen-III oxidase family. In terms of assembly, homodimer. It depends on a divalent metal cation as a cofactor.

The protein localises to the cytoplasm. The enzyme catalyses coproporphyrinogen III + O2 + 2 H(+) = protoporphyrinogen IX + 2 CO2 + 2 H2O. The protein operates within porphyrin-containing compound metabolism; protoporphyrin-IX biosynthesis; protoporphyrinogen-IX from coproporphyrinogen-III (O2 route): step 1/1. In terms of biological role, involved in the heme biosynthesis. Catalyzes the aerobic oxidative decarboxylation of propionate groups of rings A and B of coproporphyrinogen-III to yield the vinyl groups in protoporphyrinogen-IX. The sequence is that of Oxygen-dependent coproporphyrinogen-III oxidase from Aromatoleum aromaticum (strain DSM 19018 / LMG 30748 / EbN1) (Azoarcus sp. (strain EbN1)).